Reading from the N-terminus, the 473-residue chain is Photosystem II CP43 reaction center protein (473 aa).

Residues 1–14 constitute a propeptide that is removed on maturation; sequence MKTLYSLRRFYHVE. T15 carries the post-translational modification N-acetylthreonine. Position 15 is a phosphothreonine (T15). Helical transmembrane passes span 69-93, 134-155, 178-200, 255-275, and 291-312; these read LFEVAHFVPEKPMYEQGLILLPHLA, LLGPETLEESFPFFGYVWKDRN, KALYFGGVYDTWAPGGGDVRKIT, KPFAWARRAFVWSGEAYLSYS, and WFNNTAYPSEFYGPTGPEASQA. E367 contributes to the [CaMn4O5] cluster binding site. Residues 447 to 471 traverse the membrane as a helical segment; sequence RARAAAAGFEKGIDRDFEPVLSMTP.

It belongs to the PsbB/PsbC family. PsbC subfamily. PSII is composed of 1 copy each of membrane proteins PsbA, PsbB, PsbC, PsbD, PsbE, PsbF, PsbH, PsbI, PsbJ, PsbK, PsbL, PsbM, PsbT, PsbX, PsbY, PsbZ, Psb30/Ycf12, at least 3 peripheral proteins of the oxygen-evolving complex and a large number of cofactors. It forms dimeric complexes. Binds multiple chlorophylls and provides some of the ligands for the Ca-4Mn-5O cluster of the oxygen-evolving complex. It may also provide a ligand for a Cl- that is required for oxygen evolution. PSII binds additional chlorophylls, carotenoids and specific lipids. serves as cofactor.

It localises to the plastid. The protein resides in the chloroplast thylakoid membrane. One of the components of the core complex of photosystem II (PSII). It binds chlorophyll and helps catalyze the primary light-induced photochemical processes of PSII. PSII is a light-driven water:plastoquinone oxidoreductase, using light energy to abstract electrons from H(2)O, generating O(2) and a proton gradient subsequently used for ATP formation. In Ipomoea purpurea (Common morning glory), this protein is Photosystem II CP43 reaction center protein.